A 77-amino-acid chain; its full sequence is Putative antitoxin VapB3 (77 aa).

Belongs to the UPF0330 family.

In terms of biological role, possibly the antitoxin component of a type II toxin-antitoxin (TA) system. Its cognate toxin is VapC3 (Potential). The sequence is that of Putative antitoxin VapB3 (vapB3) from Methanocaldococcus jannaschii (strain ATCC 43067 / DSM 2661 / JAL-1 / JCM 10045 / NBRC 100440) (Methanococcus jannaschii).